Reading from the N-terminus, the 825-residue chain is Putative pentatricopeptide repeat-containing protein At2g01510 (825 aa).

PPR repeat units lie at residues 47–77 (DTCR…MPHK), 78–108 (NTVS…MPDR), 109–143 (TVVT…SSCT), 146–180 (DHVT…GFDT), 183–213 (FLTV…IPEK), 214–248 (DSVT…GHQP), 249–283 (SDFT…GFSR), 284–314 (DASV…MPEL), 315–349 (DFVS…GFDR), 350–384 (RNFP…TADS), 385–415 (ILHV…LPQR), 416–450 (TTVS…NLRA), 451–485 (DQST…GNLE), 486–516 (NVFS…MPDR), 517–551 (NAVS…GLQP), 552–587 (DSVS…GITP), and 588–618 (KKKH…MPFE). The segment at 623-699 (MWSSVLNACR…VPAYSWVEVN (77 aa)) is type E motif. The segment at 700–730 (HKIHVFSSNDQTHPNGDEIVRKINELTAEIE) is type E(+) motif. The tract at residues 731–825 (REGYKPDTSS…EGVCSCGDYW (95 aa)) is type DYW motif.

This sequence belongs to the PPR family. PCMP-H subfamily.

The protein is Putative pentatricopeptide repeat-containing protein At2g01510 (PCMP-H36) of Arabidopsis thaliana (Mouse-ear cress).